Here is a 232-residue protein sequence, read N- to C-terminus: Dephospho-CoA kinase (232 aa).

Residues 3-206 (IVGLTGGIAS…RPLTWIEFWR (204 aa)) enclose the DPCK domain. 8 to 15 (GGIASGKS) lines the ATP pocket.

It belongs to the CoaE family.

It localises to the peroxisome. It catalyses the reaction 3'-dephospho-CoA + ATP = ADP + CoA + H(+). It functions in the pathway cofactor biosynthesis; coenzyme A biosynthesis; CoA from (R)-pantothenate: step 5/5. Catalyzes the phosphorylation of the 3'-hydroxyl group of dephosphocoenzyme A to form coenzyme A. The chain is Dephospho-CoA kinase from Arabidopsis thaliana (Mouse-ear cress).